Consider the following 248-residue polypeptide: UPF0651 protein YPL107W, mitochondrial (248 aa).

A mitochondrion-targeting transit peptide spans 1–26 (MIRNQGWSLLYRIYPVRRFTRYSRVD). An Oxidoreductase-like domain is found at 69-116 (KKIAGVQVPAKPQEPDNCCMSGCVNCVWEIYSEDLRDWKHRRKEAAEK).

This sequence belongs to the UPF0651 family.

Its subcellular location is the mitochondrion. The polypeptide is UPF0651 protein YPL107W, mitochondrial (Saccharomyces cerevisiae (strain ATCC 204508 / S288c) (Baker's yeast)).